The following is a 248-amino-acid chain: MSDSKDQIYQDAKGAVGAFEFDERVAHVFTDMINRSVPGYAMMLEMIGVISRRYAQAGAHCYDLGCSLGASTLAIRSNLKHFNESDNKPKVIGVDNSAAMVERCRVNMERMPSVIPTEILCQDILSTPIENASIAVMNFTLQFIPLAQREDLLHRIAVNMKPGGAMVLSEKIEFADTDKQHTLFDLHHDFKRSRGYSDLEIAQKRSALENVLVPETIEAHIERLQRAGFSQAYLWFQCFNFVSFLAIK.

Residues tyrosine 40, 65 to 67 (GCS), 95 to 96 (DN), 123 to 124 (DI), asparagine 138, and arginine 205 each bind S-adenosyl-L-methionine.

Belongs to the class I-like SAM-binding methyltransferase superfamily. Cx-SAM synthase family. In terms of assembly, homodimer.

It carries out the reaction prephenate + S-adenosyl-L-methionine = carboxy-S-adenosyl-L-methionine + 3-phenylpyruvate + H2O. Its function is as follows. Catalyzes the conversion of S-adenosyl-L-methionine (SAM) to carboxy-S-adenosyl-L-methionine (Cx-SAM). This chain is Carboxy-S-adenosyl-L-methionine synthase, found in Hahella chejuensis (strain KCTC 2396).